The primary structure comprises 747 residues: DNA-directed RNA polymerase subunit beta' (747 aa).

Zn(2+)-binding residues include Cys-70, Cys-72, Cys-97, and Cys-100. Asp-502, Asp-504, and Asp-506 together coordinate Mg(2+).

It belongs to the RNA polymerase beta' chain family. RpoC1 subfamily. In plastids the minimal PEP RNA polymerase catalytic core is composed of four subunits: alpha, beta, beta', and beta''. When a (nuclear-encoded) sigma factor is associated with the core the holoenzyme is formed, which can initiate transcription. Requires Mg(2+) as cofactor. The cofactor is Zn(2+).

The protein localises to the plastid. The protein resides in the chloroplast. It carries out the reaction RNA(n) + a ribonucleoside 5'-triphosphate = RNA(n+1) + diphosphate. DNA-dependent RNA polymerase catalyzes the transcription of DNA into RNA using the four ribonucleoside triphosphates as substrates. In Gnetum parvifolium (Small-leaved jointfir), this protein is DNA-directed RNA polymerase subunit beta'.